Consider the following 295-residue polypeptide: UDP-N-acetylenolpyruvoylglucosamine reductase (295 aa).

An FAD-binding PCMH-type domain is found at 23 to 188; the sequence is KVGGPADFLA…ISAKFALKPG (166 aa). Arg167 is a catalytic residue. Ser217 serves as the catalytic Proton donor. Residue Glu287 is part of the active site.

This sequence belongs to the MurB family. The cofactor is FAD.

It localises to the cytoplasm. It catalyses the reaction UDP-N-acetyl-alpha-D-muramate + NADP(+) = UDP-N-acetyl-3-O-(1-carboxyvinyl)-alpha-D-glucosamine + NADPH + H(+). It functions in the pathway cell wall biogenesis; peptidoglycan biosynthesis. Its function is as follows. Cell wall formation. The sequence is that of UDP-N-acetylenolpyruvoylglucosamine reductase from Streptococcus pyogenes serotype M28 (strain MGAS6180).